Here is an 862-residue protein sequence, read N- to C-terminus: DNA mismatch repair protein MutS (862 aa).

Residue 604 to 611 coordinates ATP; the sequence is GPNMAGKS.

Belongs to the DNA mismatch repair MutS family.

This protein is involved in the repair of mismatches in DNA. It is possible that it carries out the mismatch recognition step. This protein has a weak ATPase activity. This Brevibacillus brevis (strain 47 / JCM 6285 / NBRC 100599) protein is DNA mismatch repair protein MutS.